A 321-amino-acid polypeptide reads, in one-letter code: AA9 family lytic polysaccharide monooxygenase A (321 aa).

A signal peptide spans 1–21 (MFRAQSFLPVLALVLRVAAHG). Position 20 (histidine 20) interacts with Cu(2+). Cysteines 71 and 197 form a disulfide. An N-linked (GlcNAc...) asparagine glycan is attached at asparagine 72. Position 105 (histidine 105) interacts with Cu(2+). The N-linked (GlcNAc...) asparagine glycan is linked to asparagine 157. Residues histidine 183 and glutamine 192 each coordinate O2. Position 194 (tyrosine 194) interacts with Cu(2+). A disordered region spans residues 278–306 (SSSAAATQSSSAAPSSSAIGTSTASSAAA). The GPI-anchor amidated serine moiety is linked to residue serine 293. A propeptide spans 294-321 (SAIGTSTASSAAASGTAIVDANTCMNSA) (removed in mature form).

The protein belongs to the polysaccharide monooxygenase AA9 family. Cu(2+) is required as a cofactor.

Its subcellular location is the cell membrane. The catalysed reaction is [(1-&gt;4)-beta-D-glucosyl]n+m + reduced acceptor + O2 = 4-dehydro-beta-D-glucosyl-[(1-&gt;4)-beta-D-glucosyl]n-1 + [(1-&gt;4)-beta-D-glucosyl]m + acceptor + H2O.. Lytic polysaccharide monooxygenase (LPMO) that depolymerizes crystalline and amorphous polysaccharides via the oxidation of scissile alpha- or beta-(1-4)-glycosidic bonds, yielding C1 or C4 oxidation products. Catalysis by LPMOs requires the reduction of the active-site copper from Cu(II) to Cu(I) by a reducing agent and H(2)O(2) or O(2) as a cosubstrate. Has broad specificity, cleaving at any position along the beta-glucan backbone of xyloglucan, regardless of substitutions. Shows minor activity on glucomannan. The sequence is that of AA9 family lytic polysaccharide monooxygenase A from Gloeophyllum trabeum (strain ATCC 11539 / FP-39264 / Madison 617) (Brown rot fungus).